Consider the following 97-residue polypeptide: U-reduvitoxin-Pr11a (97 aa).

A signal peptide spans 1–20; it reads MKTALFLVFALAFIAVEGKM. Pacifastin domains are found at residues 22–59 and 62–97; these read RACSKPGQTVLAPDGCNHCRCSEKGILMACTKMMCPPR and EKSCKPGTTFKHKDGCNTCKCSDDGKNALCTSKLCL. Cystine bridges form between Cys-24-Cys-42, Cys-37-Cys-56, and Cys-40-Cys-51. The segment at 57 to 59 is pro-Pro-Arg motif necessary for proteolytic processing; it reads PPR. Intrachain disulfides connect Cys-65–Cys-82, Cys-77–Cys-96, and Cys-80–Cys-91.

This sequence belongs to the protease inhibitor I19 family. In terms of tissue distribution, expressed by the venom gland.

Its subcellular location is the secreted. In terms of biological role, inhibits trypsin activity and prophenoloxidase (PPO) activation, an enzyme essential for both clotting and insect innate immune responses. It does not inhibit activity of chymotrypsin and protease K, and has no effect on phenoloxidase (PO) activity. In Platymeris rhadamanthus (Red spot assassin bug), this protein is U-reduvitoxin-Pr11a.